Here is a 581-residue protein sequence, read N- to C-terminus: CUE domain-containing protein 3 (581 aa).

The CUE domain maps to 271 to 314; the sequence is INPGDVKSLIELFPQLSVEEAVEHLSASLGNIDAACESVITSSL. Tyr386 is modified (phosphotyrosine). 2 disordered regions span residues 422 to 448 and 522 to 581; these read DDTY…ASSK and GSGN…SNEK. Residues 522–542 show a composition bias toward polar residues; sequence GSGNTNIGSLRQTKFKQSNYT. Over residues 552 to 581 the composition is skewed to basic residues; sequence QHRPSRPSKNPSLKKKKYVRTKPKKASNEK.

As to quaternary structure, component of the RQT (ribosome quality control trigger) complex.

It is found in the cytoplasm. Its subcellular location is the nucleus. Involved in activation of the ribosome quality control (RQC) pathway, a pathway that degrades nascent peptide chains during problematic translation. Specifically recognizes and binds RPS20/uS10 ubiquitinated by HEL2, promoting recruitment of the RQT (ribosome quality control trigger) complex on stalled ribosomes, followed by disassembly of stalled ribosomes. This chain is CUE domain-containing protein 3, found in Schizosaccharomyces pombe (strain 972 / ATCC 24843) (Fission yeast).